A 193-amino-acid chain; its full sequence is dCTP deaminase (193 aa).

Residues arginine 110–arginine 115, aspartate 128, valine 136–glutamate 138, tyrosine 171, lysine 178, and glutamine 182 contribute to the dCTP site. Glutamate 138 serves as the catalytic Proton donor/acceptor. A disordered region spans residues arginine 169–aspartate 193.

Belongs to the dCTP deaminase family. In terms of assembly, homotrimer.

The enzyme catalyses dCTP + H2O + H(+) = dUTP + NH4(+). Its pathway is pyrimidine metabolism; dUMP biosynthesis; dUMP from dCTP (dUTP route): step 1/2. Its function is as follows. Catalyzes the deamination of dCTP to dUTP. This chain is dCTP deaminase, found in Yersinia pestis bv. Antiqua (strain Antiqua).